Reading from the N-terminus, the 99-residue chain is Aspartyl/glutamyl-tRNA(Asn/Gln) amidotransferase subunit C (99 aa).

This sequence belongs to the GatC family. As to quaternary structure, heterotrimer of A, B and C subunits.

It carries out the reaction L-glutamyl-tRNA(Gln) + L-glutamine + ATP + H2O = L-glutaminyl-tRNA(Gln) + L-glutamate + ADP + phosphate + H(+). The catalysed reaction is L-aspartyl-tRNA(Asn) + L-glutamine + ATP + H2O = L-asparaginyl-tRNA(Asn) + L-glutamate + ADP + phosphate + 2 H(+). Allows the formation of correctly charged Asn-tRNA(Asn) or Gln-tRNA(Gln) through the transamidation of misacylated Asp-tRNA(Asn) or Glu-tRNA(Gln) in organisms which lack either or both of asparaginyl-tRNA or glutaminyl-tRNA synthetases. The reaction takes place in the presence of glutamine and ATP through an activated phospho-Asp-tRNA(Asn) or phospho-Glu-tRNA(Gln). The chain is Aspartyl/glutamyl-tRNA(Asn/Gln) amidotransferase subunit C from Rhodococcus opacus (strain B4).